A 778-amino-acid polypeptide reads, in one-letter code: Endonuclease MutS2 (778 aa).

328–335 serves as a coordination point for ATP; sequence GPNTGGKT. The Smr domain occupies 702 to 777; that stretch reads LDLRGKRYEE…GSGATIVTFK (76 aa).

Belongs to the DNA mismatch repair MutS family. MutS2 subfamily. As to quaternary structure, homodimer. Binds to stalled ribosomes, contacting rRNA.

Functionally, endonuclease that is involved in the suppression of homologous recombination and thus may have a key role in the control of bacterial genetic diversity. In terms of biological role, acts as a ribosome collision sensor, splitting the ribosome into its 2 subunits. Detects stalled/collided 70S ribosomes which it binds and splits by an ATP-hydrolysis driven conformational change. Acts upstream of the ribosome quality control system (RQC), a ribosome-associated complex that mediates the extraction of incompletely synthesized nascent chains from stalled ribosomes and their subsequent degradation. Probably generates substrates for RQC. This chain is Endonuclease MutS2, found in Streptococcus pneumoniae serotype 2 (strain D39 / NCTC 7466).